We begin with the raw amino-acid sequence, 400 residues long: D(3) dopamine receptor (400 aa).

The Extracellular portion of the chain corresponds to 1 to 32; that stretch reads MAPLSQLSGHLNYTCGVENSTGASQARPHAYY. Asn-12 and Asn-19 each carry an N-linked (GlcNAc...) asparagine glycan. A helical membrane pass occupies residues 33–55; that stretch reads ALSYCALILAIVFGNGLVCMAVL. The Cytoplasmic segment spans residues 56 to 65; it reads KERALQTTTN. The helical transmembrane segment at 66–88 threads the bilayer; sequence YLVVSLAVADLLVATLVMPWVVY. Residues 89–104 are Extracellular-facing; that stretch reads LEVTGGVWNFSRVCCD. Asn-97 carries N-linked (GlcNAc...) asparagine glycosylation. Residues Cys-103 and Cys-181 are joined by a disulfide bond. A helical membrane pass occupies residues 105–126; it reads VFVTLDVMMCTASILNLCAISI. The Cytoplasmic portion of the chain corresponds to 127–149; sequence DRYTAVVMPVHYQHGTGQSSCRR. The chain crosses the membrane as a helical span at residues 150 to 170; that stretch reads VTLMITAVWVLAFAVSCPLLF. The Extracellular segment spans residues 171–187; the sequence is GFNTTGDPTVCSISNPD. Residue Asn-173 is glycosylated (N-linked (GlcNAc...) asparagine). A helical membrane pass occupies residues 188–209; that stretch reads FVIYSSVVSFYLPFGVTVLVYA. Residues 210-329 are Cytoplasmic-facing; sequence RIYVVLKQRR…VPLREKKATQ (120 aa). Residues 330 to 351 traverse the membrane as a helical segment; that stretch reads MVAIVLGAFIVCWLPFFLTHVL. Residues 352–366 lie on the Extracellular side of the membrane; that stretch reads NTHCQTCHVSPELYS. The cysteines at positions 355 and 358 are disulfide-linked. The helical transmembrane segment at 367–386 threads the bilayer; sequence ATTWLGYVNSALNPVIYTTF. Residues 387 to 400 are Cytoplasmic-facing; it reads NIEFRKAFLKILSC.

It belongs to the G-protein coupled receptor 1 family. Interacts with CLIC6. Interacts with GRK4. Interacts with PALM. Interacts with FLNA (via filamin repeat 21); increases PKA-mediated phosphorylation of FLNA. Phosphorylated by GRK4. In terms of processing, palmitoylated.

The protein resides in the cell membrane. Dopamine receptor whose activity is mediated by G proteins which inhibit adenylyl cyclase. Promotes cell proliferation. The polypeptide is D(3) dopamine receptor (DRD3) (Chlorocebus aethiops (Green monkey)).